Reading from the N-terminus, the 347-residue chain is Sulfate/thiosulfate import ATP-binding protein CysA 1 (347 aa).

The ABC transporter domain maps to 3-237 (VRVESLRKEF…PVSPFVYGFI (235 aa)). 35–42 (GPSGSGKT) serves as a coordination point for ATP.

Belongs to the ABC transporter superfamily. Sulfate/tungstate importer (TC 3.A.1.6) family. In terms of assembly, the complex is composed of two ATP-binding proteins (CysA), two transmembrane proteins (CysT and CysW) and a solute-binding protein (CysP).

It localises to the cell inner membrane. The enzyme catalyses sulfate(out) + ATP + H2O = sulfate(in) + ADP + phosphate + H(+). It carries out the reaction thiosulfate(out) + ATP + H2O = thiosulfate(in) + ADP + phosphate + H(+). Its function is as follows. Part of the ABC transporter complex CysAWTP involved in sulfate/thiosulfate import. Responsible for energy coupling to the transport system. The sequence is that of Sulfate/thiosulfate import ATP-binding protein CysA 1 from Rhizobium meliloti (strain 1021) (Ensifer meliloti).